Reading from the N-terminus, the 262-residue chain is Flap endonuclease Xni (262 aa).

Aspartate 109 is a binding site for Mg(2+). A 5'-3' exonuclease domain is found at 165–255 (LKPEQLADYW…FNLQDIRYEK (91 aa)). K(+)-binding residues include leucine 176, alanine 177, isoleucine 187, and valine 190. The tract at residues 189–194 (GVGPKA) is interaction with DNA.

Belongs to the Xni family. Requires Mg(2+) as cofactor. K(+) is required as a cofactor.

Functionally, has flap endonuclease activity. During DNA replication, flap endonucleases cleave the 5'-overhanging flap structure that is generated by displacement synthesis when DNA polymerase encounters the 5'-end of a downstream Okazaki fragment. The protein is Flap endonuclease Xni of Aliivibrio fischeri (strain MJ11) (Vibrio fischeri).